The sequence spans 337 residues: Holliday junction branch migration complex subunit RuvB (337 aa).

The tract at residues 4-184 (QDRIISAELK…FGIVQRLEFY (181 aa)) is large ATPase domain (RuvB-L). Residues isoleucine 23, arginine 24, glycine 65, lysine 68, threonine 69, threonine 70, 131–133 (EDY), arginine 174, tyrosine 184, and arginine 221 contribute to the ATP site. Threonine 69 contacts Mg(2+). The interval 185 to 255 (DVESLTTIVA…VAQRALDMLS (71 aa)) is small ATPAse domain (RuvB-S). The head domain (RuvB-H) stretch occupies residues 258 to 337 (SQGFDHLDRR…FNYQLPSDFK (80 aa)). DNA-binding residues include arginine 313 and arginine 318.

The protein belongs to the RuvB family. As to quaternary structure, homohexamer. Forms an RuvA(8)-RuvB(12)-Holliday junction (HJ) complex. HJ DNA is sandwiched between 2 RuvA tetramers; dsDNA enters through RuvA and exits via RuvB. An RuvB hexamer assembles on each DNA strand where it exits the tetramer. Each RuvB hexamer is contacted by two RuvA subunits (via domain III) on 2 adjacent RuvB subunits; this complex drives branch migration. In the full resolvosome a probable DNA-RuvA(4)-RuvB(12)-RuvC(2) complex forms which resolves the HJ.

The protein resides in the cytoplasm. The catalysed reaction is ATP + H2O = ADP + phosphate + H(+). The RuvA-RuvB-RuvC complex processes Holliday junction (HJ) DNA during genetic recombination and DNA repair, while the RuvA-RuvB complex plays an important role in the rescue of blocked DNA replication forks via replication fork reversal (RFR). RuvA specifically binds to HJ cruciform DNA, conferring on it an open structure. The RuvB hexamer acts as an ATP-dependent pump, pulling dsDNA into and through the RuvAB complex. RuvB forms 2 homohexamers on either side of HJ DNA bound by 1 or 2 RuvA tetramers; 4 subunits per hexamer contact DNA at a time. Coordinated motions by a converter formed by DNA-disengaged RuvB subunits stimulates ATP hydrolysis and nucleotide exchange. Immobilization of the converter enables RuvB to convert the ATP-contained energy into a lever motion, pulling 2 nucleotides of DNA out of the RuvA tetramer per ATP hydrolyzed, thus driving DNA branch migration. The RuvB motors rotate together with the DNA substrate, which together with the progressing nucleotide cycle form the mechanistic basis for DNA recombination by continuous HJ branch migration. Branch migration allows RuvC to scan DNA until it finds its consensus sequence, where it cleaves and resolves cruciform DNA. The sequence is that of Holliday junction branch migration complex subunit RuvB from Marinomonas sp. (strain MWYL1).